Here is a 164-residue protein sequence, read N- to C-terminus: Diphosphoinositol polyphosphate phosphohydrolase 3-alpha (164 aa).

Substrate contacts are provided by residues arginine 9, 17 to 19 (KKR), and 38 to 40 (SSR). One can recognise a Nudix hydrolase domain in the interval 17–144 (KKRAACLCFR…VHAEYLEKLK (128 aa)). Glycine 49 and glutamate 65 together coordinate Mg(2+). The short motif at 50 to 71 (GGMEPEEEPDGAAVREVYEEAG) is the Nudix box element. Glutamate 68 functions as the Proton acceptor in the catalytic mechanism. Glutamate 69 is a Mg(2+) binding site. Substrate-binding positions include 89–91 (RKH), arginine 115, and lysine 133. Residues 144-164 (KLGGSPTNGNSAAPSPPESEP) are disordered.

Belongs to the Nudix hydrolase family. DIPP subfamily. Mg(2+) is required as a cofactor. Requires Mn(2+) as cofactor. In terms of tissue distribution, mainly expressed in testis, liver kidney and, at lower level, in heart, brain, spleen, lung and skeletal muscle.

The protein localises to the cytoplasm. The enzyme catalyses diphospho-myo-inositol polyphosphate + H2O = myo-inositol polyphosphate + phosphate.. It catalyses the reaction P(1),P(6)-bis(5'-adenosyl) hexaphosphate + H2O = adenosine 5'-pentaphosphate + AMP + 2 H(+). It carries out the reaction P(1),P(5)-bis(5'-adenosyl) pentaphosphate + H2O = adenosine 5'-tetraphosphate + AMP + 2 H(+). Cleaves a beta-phosphate from the diphosphate groups in PP-InsP5 (diphosphoinositol pentakisphosphate), suggesting that it may play a role in signal transduction. Also able to catalyze the hydrolysis of dinucleoside oligophosphates, with Ap6A and Ap5A being the preferred substrates. The major reaction products are ADP and p4a from Ap6A and ADP and ATP from Ap5A. Also able to hydrolyze 5-phosphoribose 1-diphosphate; however, the relevance of such activity in vivo remains unclear. The polypeptide is Diphosphoinositol polyphosphate phosphohydrolase 3-alpha (Mus musculus (Mouse)).